Consider the following 463-residue polypeptide: uncharacterized protein (463 aa).

12 helical membrane passes run Ile17–Ala37, Leu40–Met60, Trp97–Phe117, Val122–Ala142, Phe153–Ile173, Gly201–Val221, Ile244–Ile264, Val278–Ser298, Ala335–Ala355, Val357–Leu377, Leu401–Ala421, and Ala429–Phe449.

This sequence belongs to the amino acid-polyamine-organocation (APC) superfamily.

The protein resides in the cell membrane. This is an uncharacterized protein from Bacillus subtilis (strain 168).